A 26-amino-acid polypeptide reads, in one-letter code: GIGAILKVLSTGLPALISWIKRKRQE.

The residue at position 1 (Gly1) is an N-formylglycine; partial. Glu26 is modified (glutamic acid 1-amide).

This sequence belongs to the melittin family. As to quaternary structure, monomer (in solution and for integration into membranes), homotetramer (in solution and potentially as a toroidal pore in membranes), and potenially homomultimer (as a toroidal pore in membranes). Expressed by the venom gland.

The protein localises to the secreted. Its subcellular location is the target cell membrane. Main toxin of bee venom with strong hemolytic activity and antimicrobial activity. It has enhancing effects on bee venom phospholipase A2 activity. This amphipathic toxin binds to negatively charged membrane surface and forms pore by inserting into lipid bilayers inducing the leakage of ions and molecules and the enhancement of permeability that ultimately leads to cell lysis. It acts as a voltage-gated pore with higher selectivity for anions over cations. The ion conductance has been shown to be voltage-dependent. Self-association of melittin in membranes is promoted by high ionic strength, but not by the presence of negatively charged lipids. In vivo, intradermal injection into healthy human volunteers produce sharp pain sensation and an inflammatory response. It produces pain by activating primary nociceptor cells directly and indirectly due to its ability to activate plasma membrane phospholipase A2 and its pore-forming activity. In Apis dorsata (Giant honeybee), this protein is Melittin (MELT).